The primary structure comprises 538 residues: Retinoblastoma-binding protein 5 (538 aa).

WD repeat units follow at residues Asp-22–Ser-63 and Ala-64–Arg-103. Lys-129 is covalently cross-linked (Glycyl lysine isopeptide (Lys-Gly) (interchain with G-Cter in SUMO2)). 4 WD repeats span residues Asp-148–Ser-188, Ser-196–Arg-235, Val-249–His-291, and Thr-293–Ala-331. A Phosphothreonine; by CDK1 modification is found at Thr-252. The tract at residues Ser-330–Gly-366 is interaction with ASH2L. A compositionally biased stretch (acidic residues) spans Glu-344–Ser-360. Residues Glu-344–Val-377 form a disordered region. The residue at position 350 (Ser-350) is a Phosphoserine. Residues Glu-371–Val-380 are interaction with WDR5. A phosphoserine mark is found at Ser-388 and Ser-389. The disordered stretch occupies residues Val-408–Leu-538. A compositionally biased stretch (basic residues) spans Ser-479 to Ser-490. Residues Lys-491–Leu-510 are compositionally biased toward basic and acidic residues. Ser-497 is subject to Phosphoserine; by CDK1. Ser-525 carries the phosphoserine modification.

As to quaternary structure, component of the SET1 complex, at least composed of the catalytic subunit (SETD1A or SETD1B), WDR5, WDR82, RBBP5, ASH2L/ASH2, CXXC1/CFP1, HCFC1 and DPY30. Core component of several methyltransferase-containing complexes including MLL1/MLL, MLL2/3 (also named ASCOM complex) and MLL4/WBP7. Each complex is at least composed of ASH2L, RBBP5, WDR5, DPY30, one or more specific histone methyltransferases (KMT2A/MLL1, KMT2D/MLL2, KMT2C/MLL3 and KMT2B/MLL4), and the facultative components PAGR1, BACC1, CHD8, E2F6, HCFC1, HCFC2, HSP70, INO80C, KDM6A, KANSL1, LAS1L, MAX, MCRS1, MEN1, MGA, MYST1/MOF, NCOA6, PAXIP1/PTIP, PELP1, PHF20, PRP31, RING2, RUVB1/TIP49A, RUVB2/TIP49B, SENP3, TAF1, TAF4, TAF6, TAF7, TAF9, TEX10 and alpha- and beta-tubulin. Component of a histone methylation complex composed of at least ZNF335, RBBP5, ASH2L and WDR5; the complex may have histone H3-specific methyltransferase activity, however does not have specificity for 'Lys-4' of histone H3. Interacts with ZNF335. Interacts with ASH2L; the interaction is direct. Interacts with WDR5; the interaction is direct. Components of the ZNF335-RBBP5-ASH2L-WDR5 histone methylation complex may associate with components of a nuclear receptor-mediated transcription complex to form a complex at least composed of ZNF335, HCFC1, CCAR2, EMSY, MKI67, RBBP5, ASH2L and WDR5. Within this complex interacts with EMSY. Found in a complex with RBBP5, ASH2L, DPY30, KMT2A, KMT2D and WDR5. Interacts with SETD1A. Interacts with WDR82. Ubiquitously expressed.

The protein localises to the nucleus. Functionally, in embryonic stem (ES) cells, plays a crucial role in the differentiation potential, particularly along the neural lineage, regulating gene induction and H3 'Lys-4' methylation at key developmental loci, including that mediated by retinoic acid. Does not affect ES cell self-renewal. Component or associated component of some histone methyltransferase complexes which regulates transcription through recruitment of those complexes to gene promoters. As part of the MLL1/MLL complex, involved in mono-, di- and trimethylation at 'Lys-4' of histone H3. Histone H3 'Lys-4' methylation represents a specific tag for epigenetic transcriptional activation. In association with ASH2L and WDR5, stimulates the histone methyltransferase activities of KMT2A, KMT2B, KMT2C, KMT2D, SETD1A and SETD1B. In Homo sapiens (Human), this protein is Retinoblastoma-binding protein 5 (RBBP5).